The chain runs to 2149 residues: Non-reducing polyketide synthase PvBS090_009107 (2149 aa).

An N-terminal acylcarrier protein transacylase domain (SAT) region spans residues 8 to 244 (YLFGDQTGEF…VRVPVHAPYH (237 aa)). The 432-residue stretch at 375–806 (QSKIAIIGLS…GGNTALLIED (432 aa)) folds into the Ketosynthase family 3 (KS3) domain. Residues cysteine 547, histidine 682, and histidine 724 each act as for beta-ketoacyl synthase activity in the active site. A malonyl-CoA:ACP transacylase (MAT) domain region spans residues 911–1231 (FVFTGQGAQY…LSAIYLAGVD (321 aa)). Serine 1000 acts as the For acyl/malonyl transferase activity in catalysis. The product template (PT) domain stretch occupies residues 1290–1604 (TTSVQRIVET…RQVLNTVLPP (315 aa)). The interval 1294 to 1426 (QRIVETRDEG…CLVKFSDTHL (133 aa)) is N-terminal hotdog fold. The 306-residue stretch at 1294 to 1599 (QRIVETRDEG…FQGVPRQVLN (306 aa)) folds into the PKS/mFAS DH domain. The active-site Proton acceptor; for dehydratase activity is the histidine 1326. A C-terminal hotdog fold region spans residues 1454 to 1599 (SHRMHRGMFY…FQGVPRQVLN (146 aa)). Aspartate 1512 functions as the Proton donor; for dehydratase activity in the catalytic mechanism. The segment at 1604 to 1631 (PAGGSKAAPRTTARAVPPPPINVEKPKS) is disordered. Positions 1649 to 1726 (SAGPSVLVQA…DLKQLLSQAS (78 aa)) constitute a Carrier 1 domain. Position 1686 is an O-(pantetheine 4'-phosphoryl)serine (serine 1686). 2 stretches are compositionally biased toward low complexity: residues 1722–1731 (LSQASPSDSS) and 1744–1755 (SSSTEPSTPGTP). The disordered stretch occupies residues 1722–1763 (LSQASPSDSSDSSEESHYSFRDSSSTEPSTPGTPAFFSPKRG). In terms of domain architecture, Carrier 2 spans 1769 to 1846 (VGESETIKTI…AVETALDLKP (78 aa)). Serine 1806 bears the O-(pantetheine 4'-phosphoryl)serine mark. Positions 1875 to 2147 (STHPPATSIL…KLSAFIGRAM (273 aa)) are thioesterase (TE) domain. The active-site For thioesterase activity is serine 1965.

The catalysed reaction is 6 malonyl-CoA + acetyl-CoA + 6 H(+) = naphtopyrone YWA1 + 6 CO2 + 7 CoA + H2O. It participates in secondary metabolite biosynthesis. Its pathway is pigment biosynthesis. Its function is as follows. Non-reducing polyketide synthase; part of the gene cluster 24 that mediates the biosynthesis of a pigment with an aromatic structure protecting the pigmented fungus from both ionizing and non-ionizing radiations based on a mechanism similar to melanin, that is, free radical quenching and spherical spatial arrangement. Catalyzes the biosynthesis of the gamma-naphthopyrone precursor YWA1, via condensation of one acetyl-CoA starter unit with 6 malonyl-CoA units. YWA1 is probably further processed by the additional enzymes present within the cluster 24, however these additional steps have not been characterized yet. YWA1 is not converted to DHN-melanin in Byssochlamys spectabilis since the use of the DHN-melanin pathway inhibitor pyroquilon does not result in a loss of pigmentation. The chain is Non-reducing polyketide synthase PvBS090_009107 from Byssochlamys spectabilis (Paecilomyces variotii).